The following is a 144-amino-acid chain: Large ribosomal subunit protein uL15 (144 aa).

A disordered region spans residues 1-58 (MHLNTLSPAPGSHKARKRCGRGIGSGIGKTGGRGHKGQKSRSGGSVRPGFEGGQMPLK). A compositionally biased stretch (gly residues) spans 21–31 (RGIGSGIGKTG).

It belongs to the universal ribosomal protein uL15 family. In terms of assembly, part of the 50S ribosomal subunit.

Functionally, binds to the 23S rRNA. The sequence is that of Large ribosomal subunit protein uL15 from Colwellia psychrerythraea (strain 34H / ATCC BAA-681) (Vibrio psychroerythus).